The sequence spans 338 residues: MTLSNCDSLDNLFQDPPEEEESSKFVEAVRTLMNRNDMGYPPAAANGTYCLKKIKSLNAKQWKINKKRMCMLPAVKKKNFDFHEQRSLILNLNLWKFIKFINCSSKNNYNKNNKHVRSSNNTVKNENVLPLQKHKKVDNDQRLENLFWRSWFKARKRRDIMGKPRERHIKFNDNVEQCIITDEHFIQRLPSTRLNSTDEQRPCSKSELDPCIGNAASKRSFYDYNSVYVASDAIITTAAATAIISSNSGDYQRGHDVRDVPRNVLLQAGETDFSSVLRVDSDLKLSNISHHSPVKPSSTSSHSTFIFESETDTDTDTDAETENDIDAYIDTSIPNLLL.

The tract at residues 1 to 21 (MTLSNCDSLDNLFQDPPEEEE) is disordered.

Its function is as follows. Regulatory subunit, binds to type-1 protein phosphatase. Functions with HEX2/REG1 and SNF1 protein kinase to regulate growth. Might regulate SNF1 directly or indirectly. The polypeptide is Protein REG2 (REG2) (Saccharomyces cerevisiae (strain ATCC 204508 / S288c) (Baker's yeast)).